A 64-amino-acid polypeptide reads, in one-letter code: Large ribosomal subunit protein uL29 (64 aa).

It belongs to the universal ribosomal protein uL29 family.

The sequence is that of Large ribosomal subunit protein uL29 from Levilactobacillus brevis (strain ATCC 367 / BCRC 12310 / CIP 105137 / JCM 1170 / LMG 11437 / NCIMB 947 / NCTC 947) (Lactobacillus brevis).